The primary structure comprises 335 residues: UPF0353 protein MT1528 (335 aa).

2 consecutive transmembrane segments (helical) span residues Trp18–Leu38 and Val67–Thr87. The VWFA domain maps to Val98–Leu294. The chain crosses the membrane as a helical span at residues Val309–Ile329.

The protein belongs to the UPF0353 family.

Its subcellular location is the cell membrane. The chain is UPF0353 protein MT1528 from Mycobacterium tuberculosis (strain CDC 1551 / Oshkosh).